We begin with the raw amino-acid sequence, 300 residues long: Aspartate carbamoyltransferase catalytic subunit (300 aa).

Residues arginine 54 and threonine 55 each coordinate carbamoyl phosphate. Position 82 (lysine 82) interacts with L-aspartate. 3 residues coordinate carbamoyl phosphate: arginine 104, histidine 131, and glutamine 134. Residues arginine 164 and arginine 213 each contribute to the L-aspartate site. Residues alanine 256 and proline 257 each contribute to the carbamoyl phosphate site.

It belongs to the aspartate/ornithine carbamoyltransferase superfamily. ATCase family. In terms of assembly, heterododecamer (2C3:3R2) of six catalytic PyrB chains organized as two trimers (C3), and six regulatory PyrI chains organized as three dimers (R2).

The enzyme catalyses carbamoyl phosphate + L-aspartate = N-carbamoyl-L-aspartate + phosphate + H(+). It functions in the pathway pyrimidine metabolism; UMP biosynthesis via de novo pathway; (S)-dihydroorotate from bicarbonate: step 2/3. Functionally, catalyzes the condensation of carbamoyl phosphate and aspartate to form carbamoyl aspartate and inorganic phosphate, the committed step in the de novo pyrimidine nucleotide biosynthesis pathway. The sequence is that of Aspartate carbamoyltransferase catalytic subunit from Malacoplasma penetrans (strain HF-2) (Mycoplasma penetrans).